The sequence spans 548 residues: (S)-beta-macrocarpene synthase (548 aa).

Mg(2+) contacts are provided by aspartate 302 and aspartate 306. Substrate is bound by residues aspartate 302, aspartate 306, arginine 443, and asparagine 446. A DDXXD motif motif is present at residues 302 to 306; that stretch reads DDTLD. Mg(2+)-binding residues include asparagine 446, serine 450, and glutamate 454.

The protein belongs to the terpene synthase family. Monomer. The cofactor is Mg(2+). Mn(2+) serves as cofactor. In terms of tissue distribution, expressed in roots. Not detected in leaves, unless damaged by herbivory or infected by fungi.

The protein localises to the cytoplasm. The catalysed reaction is (S)-beta-bisabolene = (S)-beta-macrocarpene. The enzyme catalyses (2E,6E)-farnesyl diphosphate = (S)-beta-bisabolene + diphosphate. It catalyses the reaction (2E)-geranyl diphosphate = (4S)-limonene + diphosphate. It carries out the reaction (2E)-geranyl diphosphate = beta-myrcene + diphosphate. The catalysed reaction is (2E)-geranyl diphosphate = terpinolene + diphosphate. The enzyme catalyses (2E)-geranyl diphosphate + H2O = (S)-linalool + diphosphate. The protein operates within secondary metabolite biosynthesis; terpenoid biosynthesis. Functionally, involved in the biosynthesis of the bicyclic sesquiterpene (S)-beta-macrocarpene. Can use both geranyl diphosphate and farnesyl diphosphate as substrate, but not geranylgeranyl diphosphate. Produces mainly (S)-beta-macrocarpene, but also smaller amounts of beta-bisabolene and (E)-beta-farnesene when used with farnesyl diphosphate as substrate. In the presence of geranyl diphosphate, produces the acyclic monoterpenes beta-myrcene and linalool along with minor amounts of the cyclic compounds limonene, alpha-thujene, sabinene and alpha-terpinolene. May be involved in plant defense. The protein is (S)-beta-macrocarpene synthase of Zea mays (Maize).